Here is a 698-residue protein sequence, read N- to C-terminus: Na(+)/H(+) antiporter NhaS5 (698 aa).

The next 12 helical transmembrane spans lie at Ser10–Phe30, Leu35–Val55, Leu65–Val85, Leu100–Phe120, Asn121–Val141, Ile156–Ile176, Ala184–Phe204, Gln222–Val242, Leu275–Val295, Leu300–Ile320, Gly333–Ala353, and Val370–Ala390.

The protein belongs to the monovalent cation:proton antiporter 2 (CPA2) transporter (TC 2.A.37) family.

It is found in the membrane. Functionally, na(+)/H(+) antiporter. This Synechocystis sp. (strain ATCC 27184 / PCC 6803 / Kazusa) protein is Na(+)/H(+) antiporter NhaS5 (nhaS5).